A 266-amino-acid chain; its full sequence is Trehalose-6-phosphate phosphatase (266 aa).

Asp20 functions as the Nucleophile in the catalytic mechanism. Residues Asp20, Asp22, and Asp198 each contribute to the Mg(2+) site. 20–22 contributes to the substrate binding site; it reads DLD.

This sequence belongs to the trehalose phosphatase family. It depends on Mg(2+) as a cofactor. Mn(2+) is required as a cofactor. The cofactor is Co(2+). Zn(2+) serves as cofactor.

It carries out the reaction alpha,alpha-trehalose 6-phosphate + H2O = alpha,alpha-trehalose + phosphate. The protein operates within glycan biosynthesis; trehalose biosynthesis. Functionally, removes the phosphate from trehalose 6-phosphate (Tre6P) to produce free trehalose. Also catalyzes the dephosphorylation of glucose-6-phosphate (Glu6P) and 2-deoxyglucose-6-phosphate (2dGlu6P). This Escherichia coli (strain K12) protein is Trehalose-6-phosphate phosphatase (otsB).